The sequence spans 439 residues: Structure-specific endonuclease subunit SLX1 homolog (439 aa).

2 disordered regions span residues 1–28 and 117–140; these read METF…GVPK and DDDD…LRAL. A compositionally biased stretch (basic and acidic residues) spans 125–136; that stretch reads ESSTEHADDDLN. Residues 166–253 form the GIY-YIG domain; it reads EFYGVYCLIS…PAVSKSLKEK (88 aa). The SLX1-type zinc-finger motif lies at 335 to 390; it reads CRLCGKDIEKLWGLVRCISQSCHSHFHSKCLAEHGLKNKNEYADQIYPLKSNCPIC.

It belongs to the SLX1 family. Forms a heterodimer with him-18/slx-4. The cofactor is a divalent metal cation.

It localises to the nucleus. Catalytic subunit of a heterodimeric structure-specific endonuclease that resolves DNA secondary structures generated during DNA repair and recombination. Has endonuclease activity towards branched DNA substrates, introducing single-strand cuts in duplex DNA close to junctions with ss-DNA (Potential). Has a preference for replication forks over 5' flap structures or Holliday junctions and shows much lower activity toward 3' flap structures. Required for proper crossover distribution through inhibition of crossover formation at the central region of chromosomes. This chain is Structure-specific endonuclease subunit SLX1 homolog, found in Caenorhabditis briggsae.